The primary structure comprises 396 residues: NADH-quinone oxidoreductase subunit D (396 aa).

The protein belongs to the complex I 49 kDa subunit family. In terms of assembly, NDH-1 is composed of 14 different subunits. Subunits NuoB, C, D, E, F, and G constitute the peripheral sector of the complex.

It is found in the cell inner membrane. The enzyme catalyses a quinone + NADH + 5 H(+)(in) = a quinol + NAD(+) + 4 H(+)(out). NDH-1 shuttles electrons from NADH, via FMN and iron-sulfur (Fe-S) centers, to quinones in the respiratory chain. The immediate electron acceptor for the enzyme in this species is believed to be ubiquinone. Couples the redox reaction to proton translocation (for every two electrons transferred, four hydrogen ions are translocated across the cytoplasmic membrane), and thus conserves the redox energy in a proton gradient. The chain is NADH-quinone oxidoreductase subunit D from Brucella abortus (strain S19).